A 101-amino-acid chain; its full sequence is Small ribosomal subunit protein uS14 (101 aa).

It belongs to the universal ribosomal protein uS14 family. Part of the 30S ribosomal subunit. Contacts proteins S3 and S10.

Its function is as follows. Binds 16S rRNA, required for the assembly of 30S particles and may also be responsible for determining the conformation of the 16S rRNA at the A site. The sequence is that of Small ribosomal subunit protein uS14 from Pseudomonas syringae pv. tomato (strain ATCC BAA-871 / DC3000).